The primary structure comprises 100 residues: Urease subunit gamma (100 aa).

It belongs to the urease gamma subunit family. In terms of assembly, heterotrimer of UreA (gamma), UreB (beta) and UreC (alpha) subunits. Three heterotrimers associate to form the active enzyme.

It is found in the cytoplasm. The enzyme catalyses urea + 2 H2O + H(+) = hydrogencarbonate + 2 NH4(+). It participates in nitrogen metabolism; urea degradation; CO(2) and NH(3) from urea (urease route): step 1/1. The sequence is that of Urease subunit gamma from Bordetella bronchiseptica (strain ATCC BAA-588 / NCTC 13252 / RB50) (Alcaligenes bronchisepticus).